We begin with the raw amino-acid sequence, 105 residues long: Large ribosomal subunit protein uL24 (105 aa).

The protein belongs to the universal ribosomal protein uL24 family. Part of the 50S ribosomal subunit.

Functionally, one of two assembly initiator proteins, it binds directly to the 5'-end of the 23S rRNA, where it nucleates assembly of the 50S subunit. In terms of biological role, one of the proteins that surrounds the polypeptide exit tunnel on the outside of the subunit. The sequence is that of Large ribosomal subunit protein uL24 from Lachnoclostridium phytofermentans (strain ATCC 700394 / DSM 18823 / ISDg) (Clostridium phytofermentans).